A 493-amino-acid chain; its full sequence is Solute carrier family 2, facilitated glucose transporter member 3 (493 aa).

Residues 1 to 10 (MGTAKVTPSL) lie on the Cytoplasmic side of the membrane. A helical membrane pass occupies residues 11–32 (VFAVTVATIGSFQFGYNTGVIN). Residues 33–64 (APETIIKDFLNYTLEERLEDLPREGLLTTLWS) lie on the Extracellular side of the membrane. The N-linked (GlcNAc...) asparagine glycan is linked to N43. The helical transmembrane segment at 65 to 85 (LCVAIFSVGGMIGSFSVGLFV) threads the bilayer. Residues 86-90 (NRFGR) lie on the Cytoplasmic side of the membrane. The helical transmembrane segment at 91 to 111 (RNSMLLVNLIAILGGCLMGFA) threads the bilayer. Topologically, residues 112–118 (KIAESVE) are extracellular. Residues 119–142 (MLILGRLIIGIFCGLCTGFVPMYI) form a helical membrane-spanning segment. The Cytoplasmic segment spans residues 143-153 (GEVSPTALRGA). Residues 154 to 174 (FGTLNQLGIVVGILVAQVFGL) form a helical membrane-spanning segment. Residue Q159 coordinates D-glucose. Residues 175–183 (DFILGSEEL) are Extracellular-facing. A helical transmembrane segment spans residues 184–204 (WPGLLGLTIIPAILQSAALPF). Residues 205–269 (CPESPRFLLI…LFKSPSYFQP (65 aa)) are Cytoplasmic-facing. Phosphothreonine is present on T232. A helical transmembrane segment spans residues 270–290 (LLISVVLQLSQQFSGINAVFY). Residues 277-279 (QLS) form an important for selectivity against fructose region. Residues 280–281 (QQ) and N286 each bind D-glucose. Residues 291 to 304 (YSTGIFQDAGVQEP) are Extracellular-facing. A helical transmembrane segment spans residues 305–325 (IYATIGAGVVNTIFTVVSLFL). N315 serves as a coordination point for D-glucose. The Cytoplasmic segment spans residues 326–331 (VERAGR). The chain crosses the membrane as a helical span at residues 332-352 (RTLHMIGLGGMAVCSVFMTIS). Residues 353–363 (LLLKDEYEAMS) are Extracellular-facing. A helical transmembrane segment spans residues 364 to 389 (FVCIVAILVYVAFFEIGPGPIPWFIV). D-glucose is bound by residues E378 and W386. The Cytoplasmic segment spans residues 390–399 (AELFSQGPRP). The helical transmembrane segment at 400–420 (AAMAVAGCSNWTSNFLVGMFF) threads the bilayer. Over 421 to 429 (PSAAAYLGA) the chain is Extracellular. A helical transmembrane segment spans residues 430-450 (YVFIIFAAFLVFFLIFTSFKV). Over 451 to 493 (PETKGRTFEDITRAFEGQAHSGKGSAGVELNSMQPVKETPGNA) the chain is Cytoplasmic. Phosphoserine is present on residues S471, S475, and S482. T489 bears the Phosphothreonine mark.

This sequence belongs to the major facilitator superfamily. Sugar transporter (TC 2.A.1.1) family. Glucose transporter subfamily. Interacts with SMIM43; the interaction may promote SLC2A3-mediated glucose transport to meet the energy needs of mesendoderm differentiation. Brain and osteoblastic cells (at protein level). Highly expressed in brain.

The protein localises to the cell membrane. The protein resides in the perikaryon. Its subcellular location is the cell projection. The catalysed reaction is D-glucose(out) = D-glucose(in). The enzyme catalyses D-galactose(in) = D-galactose(out). With respect to regulation, deoxyglucose transport is inhibited by D-glucose, D-galactose and maltose. Galactose transport is inhibited by D-glucose and maltose. Functionally, facilitative glucose transporter. Can also mediate the uptake of various other monosaccharides across the cell membrane. Mediates the uptake of glucose, 2-deoxyglucose, galactose, mannose, xylose and fucose, and probably also dehydroascorbate. Does not mediate fructose transport. Required for mesendoderm differentiation. The chain is Solute carrier family 2, facilitated glucose transporter member 3 from Rattus norvegicus (Rat).